The primary structure comprises 331 residues: Meiotically up-regulated gene 172 protein (331 aa).

The stretch at 72–166 (IKNNEYEKQR…KGNYGLVKAR (95 aa)) forms a coiled coil.

Belongs to the ADIP family.

The protein localises to the cytoplasm. Has a role in meiosis. The chain is Meiotically up-regulated gene 172 protein (mug172) from Schizosaccharomyces pombe (strain 972 / ATCC 24843) (Fission yeast).